A 155-amino-acid chain; its full sequence is Small ribosomal subunit protein uS7cz/uS7cy (155 aa).

The protein belongs to the universal ribosomal protein uS7 family. Part of the 30S ribosomal subunit.

It is found in the plastid. Its subcellular location is the chloroplast. Its function is as follows. One of the primary rRNA binding proteins, it binds directly to 16S rRNA where it nucleates assembly of the head domain of the 30S subunit. This is Small ribosomal subunit protein uS7cz/uS7cy (rps7-A) from Crucihimalaya wallichii (Rock-cress).